A 299-amino-acid polypeptide reads, in one-letter code: Regucalcin (299 aa).

E18 contacts a divalent metal cation. 3 residues coordinate substrate: R101, N103, and E121. K144 bears the N6-succinyllysine mark. N154 and D204 together coordinate a divalent metal cation. The active-site Proton donor/acceptor is the D204. N6-succinyllysine occurs at positions 244 and 253.

The protein belongs to the SMP-30/CGR1 family. In terms of assembly, monomer. The cofactor is Zn(2+). Mn(2+) is required as a cofactor. Ca(2+) serves as cofactor. It depends on Mg(2+) as a cofactor.

The protein resides in the cytoplasm. It carries out the reaction D-glucono-1,5-lactone + H2O = D-gluconate + H(+). Gluconolactonase with low activity towards other sugar lactones, including gulonolactone and galactonolactone. Can also hydrolyze diisopropyl phosphorofluoridate and phenylacetate (in vitro). Calcium-binding protein. Modulates Ca(2+) signaling, and Ca(2+)-dependent cellular processes and enzyme activities. The protein is Regucalcin (RGN) of Pongo abelii (Sumatran orangutan).